A 105-amino-acid polypeptide reads, in one-letter code: Precursor of CEP15 (105 aa).

An N-terminal signal peptide occupies residues 1–29 (MDATKIKFDVILLSFLLIISGIPSNLGLS). A propeptide spanning residues 30-90 (TSVRGTTRSE…PSPPVPDYDD (61 aa)) is cleaved from the precursor. Low complexity predominate over residues 68 to 80 (DYYDGGSSSSTTS). Residues 68–105 (DYYDGGSSSSTTSPSPPVPDYDDIYRRQGDVPSPGIGH) are disordered. Residues P99 and P101 each carry the hydroxyproline modification.

It belongs to the C-terminally encoded plant signaling peptide (CEP) family. In terms of assembly, interacts with CEP receptors (e.g. CEPR1 and CEPR2). Post-translationally, the mature small signaling peptide is generated by proteolytic processing of the longer precursor.

It is found in the secreted. It localises to the extracellular space. The protein localises to the apoplast. In terms of biological role, extracellular signaling peptide that may regulate primary root growth rate and systemic nitrogen (N)-demand signaling. In Arabidopsis thaliana (Mouse-ear cress), this protein is Precursor of CEP15.